A 258-amino-acid polypeptide reads, in one-letter code: UDP-N-acetylenolpyruvoylglucosamine reductase (258 aa).

Residue R142 is part of the active site. The active-site Proton donor is S184. The active site involves E254.

The protein belongs to the MurB family. FAD serves as cofactor.

The protein resides in the cytoplasm. It carries out the reaction UDP-N-acetyl-alpha-D-muramate + NADP(+) = UDP-N-acetyl-3-O-(1-carboxyvinyl)-alpha-D-glucosamine + NADPH + H(+). It participates in cell wall biogenesis; peptidoglycan biosynthesis. Its function is as follows. Cell wall formation. This Campylobacter jejuni subsp. jejuni serotype O:2 (strain ATCC 700819 / NCTC 11168) protein is UDP-N-acetylenolpyruvoylglucosamine reductase.